A 354-amino-acid chain; its full sequence is Serum paraoxonase/arylesterase 2 (354 aa).

Asn29 is a glycosylation site (N-linked (GlcNAc...) asparagine). A disulfide bridge links Cys42 with Cys352. Ca(2+)-binding residues include Glu53 and Asp54. Residue His114 is the Proton acceptor of the active site. 4 residues coordinate Ca(2+): Ile116, Asn167, Asp168, and Asn223. An N-linked (GlcNAc...) asparagine glycan is attached at Asn254. Positions 268 and 269 each coordinate Ca(2+). Asn269 and Asn323 each carry an N-linked (GlcNAc...) asparagine glycan.

The protein belongs to the paraoxonase family. Requires Ca(2+) as cofactor. Post-translationally, glycosylated. The signal sequence is not cleaved.

The protein resides in the membrane. The enzyme catalyses a phenyl acetate + H2O = a phenol + acetate + H(+). The catalysed reaction is An aryl dialkyl phosphate + H2O = dialkyl phosphate + an aryl alcohol.. In terms of biological role, the absence of paraoxonase activity in turkey and chicken blood and in turkey liver indicates that PON2, if expressed, does not hydrolyze paraoxon. The protein is Serum paraoxonase/arylesterase 2 (PON2) of Gallus gallus (Chicken).